A 124-amino-acid chain; its full sequence is Glycine cleavage system H protein (124 aa).

A Lipoyl-binding domain is found at 19–101; that stretch reads VATVGITNHA…EGEGWLFKME (83 aa). N6-lipoyllysine is present on Lys60.

Belongs to the GcvH family. The glycine cleavage system is composed of four proteins: P, T, L and H. (R)-lipoate is required as a cofactor.

Its function is as follows. The glycine cleavage system catalyzes the degradation of glycine. The H protein shuttles the methylamine group of glycine from the P protein to the T protein. The protein is Glycine cleavage system H protein of Thermotoga maritima (strain ATCC 43589 / DSM 3109 / JCM 10099 / NBRC 100826 / MSB8).